We begin with the raw amino-acid sequence, 125 residues long: DNA-directed RNA polymerase subunit omega (125 aa).

Belongs to the RNA polymerase subunit omega family. The RNAP catalytic core consists of 2 alpha, 1 beta, 1 beta' and 1 omega subunit. When a sigma factor is associated with the core the holoenzyme is formed, which can initiate transcription.

The catalysed reaction is RNA(n) + a ribonucleoside 5'-triphosphate = RNA(n+1) + diphosphate. Its function is as follows. Promotes RNA polymerase assembly. Latches the N- and C-terminal regions of the beta' subunit thereby facilitating its interaction with the beta and alpha subunits. The chain is DNA-directed RNA polymerase subunit omega from Zymomonas mobilis subsp. mobilis (strain ATCC 31821 / ZM4 / CP4).